The following is a 110-amino-acid chain: Large ribosomal subunit protein uL22 (110 aa).

The protein belongs to the universal ribosomal protein uL22 family. Part of the 50S ribosomal subunit.

Functionally, this protein binds specifically to 23S rRNA; its binding is stimulated by other ribosomal proteins, e.g. L4, L17, and L20. It is important during the early stages of 50S assembly. It makes multiple contacts with different domains of the 23S rRNA in the assembled 50S subunit and ribosome. The globular domain of the protein is located near the polypeptide exit tunnel on the outside of the subunit, while an extended beta-hairpin is found that lines the wall of the exit tunnel in the center of the 70S ribosome. This Paraburkholderia phytofirmans (strain DSM 17436 / LMG 22146 / PsJN) (Burkholderia phytofirmans) protein is Large ribosomal subunit protein uL22.